Reading from the N-terminus, the 34-residue chain is Corticostatin-2 (34 aa).

Cystine bridges form between Cys-3–Cys-32, Cys-5–Cys-21, and Cys-11–Cys-31.

The protein belongs to the alpha-defensin family.

The protein resides in the secreted. In terms of biological role, microbicidal activity and inhibits corticotropin (ACTH) stimulated corticosterone production. The polypeptide is Corticostatin-2 (Oryctolagus cuniculus (Rabbit)).